Here is a 133-residue protein sequence, read N- to C-terminus: Methylglyoxal synthase (133 aa).

The 133-residue stretch at 1–133 folds into the MGS-like domain; the sequence is MPPKPRIALI…ARENGAAQAG (133 aa). Substrate is bound by residues H12, K16, 38–41, and 58–59; these read TGTT and SG. D64 serves as the catalytic Proton donor/acceptor. H91 contributes to the substrate binding site.

This sequence belongs to the methylglyoxal synthase family.

It catalyses the reaction dihydroxyacetone phosphate = methylglyoxal + phosphate. In terms of biological role, catalyzes the formation of methylglyoxal from dihydroxyacetone phosphate. The protein is Methylglyoxal synthase of Cupriavidus taiwanensis (strain DSM 17343 / BCRC 17206 / CCUG 44338 / CIP 107171 / LMG 19424 / R1) (Ralstonia taiwanensis (strain LMG 19424)).